We begin with the raw amino-acid sequence, 313 residues long: NADH-ubiquinone oxidoreductase chain 1 (313 aa).

8 helical membrane-spanning segments follow: residues 6-26, 71-91, 105-125, 149-169, 173-193, 220-242, 255-275, and 293-313; these read LLSG…FTLL, VFPF…LWIL, MLLF…AGWF, MSLI…SMIM, FFVW…VSCV, GVGF…VLVI, FGMG…WVRA, and YLPS…ILNG.

Belongs to the complex I subunit 1 family.

Its subcellular location is the mitochondrion inner membrane. It catalyses the reaction a ubiquinone + NADH + 5 H(+)(in) = a ubiquinol + NAD(+) + 4 H(+)(out). In terms of biological role, core subunit of the mitochondrial membrane respiratory chain NADH dehydrogenase (Complex I) that is believed to belong to the minimal assembly required for catalysis. Complex I functions in the transfer of electrons from NADH to the respiratory chain. The immediate electron acceptor for the enzyme is believed to be ubiquinone. The chain is NADH-ubiquinone oxidoreductase chain 1 (ND1) from Heterololigo bleekeri (Spear squid).